Consider the following 380-residue polypeptide: Transcription factor SOX-7 (380 aa).

The tract at residues 24 to 43 (SDGLSPPAVPRPSGDKSSES) is disordered. The segment at residues 45–113 (IRRPMNAFMV…QHMQDYPNYK (69 aa)) is a DNA-binding region (HMG box). The disordered stretch occupies residues 139–167 (SRDQNTLPEKNGIGRGEKEDRGEYSPGAT). In terms of domain architecture, Sox C-terminal spans 260–380 (VSMMSSVSGC…ATYYNSYSVS (121 aa)). The interval 323-328 (EFDQYL) is required for beta-catenin-binding.

In terms of assembly, interacts with CTNNB1/beta-catenin; this interaction may lead to the proteasomal degradation of active CTNNB1 and thus inhibition of Wnt/beta-catenin-stimulated transcription. In terms of tissue distribution, predominantly expressed in ovary, lung and heart. In the ovary, restricted to oocytes (at protein level). Present both in mesenchymal and epithelial cells in some adult tissues, including ear.

It localises to the nucleus. It is found in the cytoplasm. Functionally, binds to and activates the CDH5 promoter, hence plays a role in the transcriptional regulation of genes expressed in the hemogenic endothelium and blocks further differentiation into blood precursors. May be required for the survival of both hematopoietic and endothelial precursors during specification. May play a role in skeletal myogenesis and up-regulate the expression of muscle markers, such as PAX3/PAX7 and Meox1. Competes with GATA4 for binding and activation of the FGF3 promoter. Represses Wnt/beta-catenin-stimulated transcription. Probably acts by targeting CTNNB1 to proteasomal degradation. Binds the DNA sequence 5'-AACAAT-3'. The chain is Transcription factor SOX-7 (Sox7) from Mus musculus (Mouse).